A 315-amino-acid polypeptide reads, in one-letter code: Type II restriction enzyme SalI (315 aa).

It catalyses the reaction Endonucleolytic cleavage of DNA to give specific double-stranded fragments with terminal 5'-phosphates.. Functionally, a P subtype restriction enzyme that recognizes the double-stranded sequence 5'-GTCGAC-3' and cleaves after G-1. In Streptomyces albus G, this protein is Type II restriction enzyme SalI.